A 143-amino-acid polypeptide reads, in one-letter code: Transcriptional regulator MraZ (143 aa).

SpoVT-AbrB domains are found at residues 5 to 47 (QYEH…SLEE) and 76 to 119 (AVEC…SKEV).

This sequence belongs to the MraZ family. As to quaternary structure, forms oligomers.

It localises to the cytoplasm. It is found in the nucleoid. The sequence is that of Transcriptional regulator MraZ from Thermoanaerobacter pseudethanolicus (strain ATCC 33223 / 39E) (Clostridium thermohydrosulfuricum).